The sequence spans 314 residues: Methionyl-tRNA formyltransferase (314 aa).

109–112 serves as a coordination point for (6S)-5,6,7,8-tetrahydrofolate; sequence SVLP.

This sequence belongs to the Fmt family.

It carries out the reaction L-methionyl-tRNA(fMet) + (6R)-10-formyltetrahydrofolate = N-formyl-L-methionyl-tRNA(fMet) + (6S)-5,6,7,8-tetrahydrofolate + H(+). In terms of biological role, attaches a formyl group to the free amino group of methionyl-tRNA(fMet). The formyl group appears to play a dual role in the initiator identity of N-formylmethionyl-tRNA by promoting its recognition by IF2 and preventing the misappropriation of this tRNA by the elongation apparatus. The sequence is that of Methionyl-tRNA formyltransferase from Dictyoglomus turgidum (strain DSM 6724 / Z-1310).